Here is a 330-residue protein sequence, read N- to C-terminus: UDP-glucose 4-epimerase (330 aa).

Residues 11–12, 31–36, 51–52, 73–77, asparagine 92, serine 117, tyrosine 141, lysine 145, and phenylalanine 169 each bind NAD(+); these read YI, DALYTG, DI, and FAAYS. Substrate is bound by residues serine 117 and tyrosine 141. Residue tyrosine 141 is the Proton acceptor of the active site. Substrate is bound by residues asparagine 170, 189–190, 206–208, arginine 221, and 282–285; these read HL, TIF, and RGGD.

Belongs to the NAD(P)-dependent epimerase/dehydratase family. As to quaternary structure, homodimer. The cofactor is NAD(+).

The catalysed reaction is UDP-alpha-D-glucose = UDP-alpha-D-galactose. The protein operates within carbohydrate metabolism; galactose metabolism. Functionally, involved in the metabolism of galactose. Catalyzes the conversion of UDP-galactose (UDP-Gal) to UDP-glucose (UDP-Glc) through a mechanism involving the transient reduction of NAD. It also could be involved in preparation of carbohydrate residues for incorporation into complex polymers, such as exopolysaccharides. This chain is UDP-glucose 4-epimerase (galE), found in Lactobacillus helveticus (Lactobacillus suntoryeus).